The following is a 168-amino-acid chain: Protein A40 (168 aa).

The Cytoplasmic segment spans residues 1-9 (MNKPKTDYA). Residues 10–30 (GYACCVICGLIVGIIFTATLL) form a helical; Signal-anchor for type II membrane protein membrane-spanning segment. Over 31–168 (KVVERKLVHT…TTFLSYHYFG (138 aa)) the chain is Extracellular. The C-type lectin domain occupies 63–168 (YNNKCIHLST…TTFLSYHYFG (106 aa)).

Belongs to the poxviridae A40 protein family.

It localises to the host membrane. The polypeptide is Protein A40 (Homo sapiens (Human)).